The chain runs to 497 residues: Vacuolar-processing enzyme beta-isozyme 1 (497 aa).

The N-terminal stretch at 1–23 is a signal peptide; that stretch reads MAARCWVWGFVVALLAVAAAADG. The N-linked (GlcNAc...) asparagine glycan is linked to N153. H180 is a catalytic residue. The active-site Nucleophile is C222. The cysteines at positions 255 and 269 are disulfide-linked. A glycan (N-linked (GlcNAc...) asparagine) is linked at N340. 2 cysteine pairs are disulfide-bonded: C432-C462 and C444-C479.

This sequence belongs to the peptidase C13 family. Post-translationally, auto-catalytic activation.

It is found in the protein storage vacuole. It catalyses the reaction Hydrolysis of proteins and small molecule substrates at -Asn-|-Xaa- bonds.. Its function is as follows. Asparagine-specific endopeptidase that may be involved in processing of proteins targeted to vacuoles. Cysteine protease required for post-translational proteolysis of seed storage proteins in the protein storage vacuole (PSV) of developing seeds, by processing of proglutelin precursor to mature glutelin subunits, thus contributing to the formation of protein crystalline structures in PSV. The polypeptide is Vacuolar-processing enzyme beta-isozyme 1 (Oryza sativa subsp. indica (Rice)).